The primary structure comprises 101 residues: Conantokin-L (101 aa).

The N-terminal stretch at 1 to 21 is a signal peptide; the sequence is MQLYTYLYLLVPLVTFHLILG. The propeptide occupies 22 to 80; the sequence is TGTLDHGGALTERRSTDAIALKPEPVLLQKSSARSTDDNGNDRLTQMKRILKKRGNKAR. E83, E84, E91, and E95 each carry 4-carboxyglutamate. A divalent metal cation is bound by residues E91 and E95. N99 bears the Asparagine amide mark.

Belongs to the conotoxin B superfamily. The cofactor is Ca(2+). It depends on Mg(2+) as a cofactor. In terms of tissue distribution, expressed by the venom duct.

The protein localises to the secreted. Conantokins inhibit N-methyl-D-aspartate (NMDA) receptors. This toxin is far less potent as an anticonvulsant compound than conantokin-R. It induces sleep-like symptoms in mice. The sequence is that of Conantokin-L from Conus lynceus (Lynceus cone).